Here is a 596-residue protein sequence, read N- to C-terminus: Inactive metallocarboxypeptidase ecm14 (596 aa).

An N-terminal signal peptide occupies residues 1–26; that stretch reads MSQSHSILSSLILLVAIIFCVPHVIA. A propeptide spanning residues 27–190 is cleaved from the precursor; it reads VPWTTDGHAQ…SYPSMAYADA (164 aa). The N-linked (GlcNAc...) asparagine glycan is linked to asparagine 114. Positions 220 to 540 constitute a Peptidase M14 domain; the sequence is NYQPLSVIIP…NVIKYFGDFL (321 aa). Zn(2+)-binding residues include histidine 285 and glutamate 288. Substrate is bound by residues 285-288, arginine 343, and 360-361; these read HARE and DR. Cysteines 354 and 376 form a disulfide. A glycan (N-linked (GlcNAc...) asparagine) is linked at asparagine 400. Residue histidine 416 participates in Zn(2+) binding. 417 to 418 is a binding site for substrate; the sequence is SY.

The protein belongs to the peptidase M14 family. Zn(2+) is required as a cofactor.

It localises to the vacuole. The protein localises to the secreted. Inactive carboxypeptidase that may play a role in cell wall organization and biogenesis. This is Inactive metallocarboxypeptidase ecm14 (ecm14) from Sclerotinia sclerotiorum (strain ATCC 18683 / 1980 / Ss-1) (White mold).